A 338-amino-acid chain; its full sequence is Ketol-acid reductoisomerase (NADP(+)) (338 aa).

Residues 1 to 181 enclose the KARI N-terminal Rossmann domain; it reads MKVYYDKDAD…GGTKGGVIET (181 aa). Residues 24–27, arginine 47, serine 52, and 82–85 each bind NADP(+); these read YGSQ and DESQ. Residue histidine 107 is part of the active site. Glycine 133 serves as a coordination point for NADP(+). One can recognise a KARI C-terminal knotted domain in the interval 182 to 327; it reads NFREETETDL…AELRAMMPWI (146 aa). Residues aspartate 190, glutamate 194, glutamate 226, and glutamate 230 each contribute to the Mg(2+) site. Serine 251 contacts substrate.

It belongs to the ketol-acid reductoisomerase family. Mg(2+) serves as cofactor.

It catalyses the reaction (2R)-2,3-dihydroxy-3-methylbutanoate + NADP(+) = (2S)-2-acetolactate + NADPH + H(+). The catalysed reaction is (2R,3R)-2,3-dihydroxy-3-methylpentanoate + NADP(+) = (S)-2-ethyl-2-hydroxy-3-oxobutanoate + NADPH + H(+). It functions in the pathway amino-acid biosynthesis; L-isoleucine biosynthesis; L-isoleucine from 2-oxobutanoate: step 2/4. The protein operates within amino-acid biosynthesis; L-valine biosynthesis; L-valine from pyruvate: step 2/4. Its function is as follows. Involved in the biosynthesis of branched-chain amino acids (BCAA). Catalyzes an alkyl-migration followed by a ketol-acid reduction of (S)-2-acetolactate (S2AL) to yield (R)-2,3-dihydroxy-isovalerate. In the isomerase reaction, S2AL is rearranged via a Mg-dependent methyl migration to produce 3-hydroxy-3-methyl-2-ketobutyrate (HMKB). In the reductase reaction, this 2-ketoacid undergoes a metal-dependent reduction by NADPH to yield (R)-2,3-dihydroxy-isovalerate. The protein is Ketol-acid reductoisomerase (NADP(+)) of Chromobacterium violaceum (strain ATCC 12472 / DSM 30191 / JCM 1249 / CCUG 213 / NBRC 12614 / NCIMB 9131 / NCTC 9757 / MK).